Here is an 84-residue protein sequence, read N- to C-terminus: Exodeoxyribonuclease 7 small subunit (84 aa).

Belongs to the XseB family. As to quaternary structure, heterooligomer composed of large and small subunits.

The protein localises to the cytoplasm. The enzyme catalyses Exonucleolytic cleavage in either 5'- to 3'- or 3'- to 5'-direction to yield nucleoside 5'-phosphates.. Functionally, bidirectionally degrades single-stranded DNA into large acid-insoluble oligonucleotides, which are then degraded further into small acid-soluble oligonucleotides. This chain is Exodeoxyribonuclease 7 small subunit, found in Bacillus velezensis (strain DSM 23117 / BGSC 10A6 / LMG 26770 / FZB42) (Bacillus amyloliquefaciens subsp. plantarum).